The following is a 310-amino-acid chain: Probable manganese-dependent inorganic pyrophosphatase (310 aa).

Mn(2+) contacts are provided by H9, D13, D15, D76, H98, and D150.

It belongs to the PPase class C family. Requires Mn(2+) as cofactor.

The protein resides in the cytoplasm. It carries out the reaction diphosphate + H2O = 2 phosphate + H(+). This Streptococcus thermophilus (strain CNRZ 1066) protein is Probable manganese-dependent inorganic pyrophosphatase.